We begin with the raw amino-acid sequence, 1600 residues long: E3 ubiquitin-protein ligase listerin (1600 aa).

HEAT repeat units lie at residues 31–65, 114–150, 161–202, 245–288, 291–344, 526–606, 853–904, 962–986, 1045–1083, 1289–1324, and 1325–1369; these read SSVP…CVKK, KTLP…DSDQ, GKLL…SSMA, YQLV…DLLR, ISVT…PDYA, RNYK…AALS, YTTN…DIRT, YASK…GAKF, LYNV…WVQT, VDVR…KADN, and SLNA…EEGT. Residues 1537–1583 form an RING-type; degenerate zinc finger; sequence CPICYAVVSADKKLPDKRCSTCNNLFHRLCLYKWFQNSNKNTCPLCR.

The protein belongs to the LTN1 family. As to quaternary structure, component of the ribosome quality control complex (RQC), composed of the E3 ubiquitin ligase RKR1/LTN1, RQC1 and RQC2, as well as CDC48 and its ubiquitin-binding cofactors associated with the 60S ribosomal subunits.

It localises to the nucleus. The protein localises to the cytoplasm. The protein resides in the cytosol. The enzyme catalyses S-ubiquitinyl-[E2 ubiquitin-conjugating enzyme]-L-cysteine + [acceptor protein]-L-lysine = [E2 ubiquitin-conjugating enzyme]-L-cysteine + N(6)-ubiquitinyl-[acceptor protein]-L-lysine.. The protein operates within protein modification; protein ubiquitination. In terms of biological role, E3 ubiquitin-protein ligase component of the ribosome quality control complex (RQC), a ribosome-associated complex that mediates ubiquitination and extraction of incompletely synthesized nascent chains for proteasomal degradation. Mediates ubiquitination of proteins derived from mRNAs lacking stop codons (non-stop proteins) and other translation arrest products induced by poly-lysine sequences and tandem rare codons. Ubiquitination leads to CDC48 recruitment for extraction and degradation of the incomplete translation product. May indirectly play a role in chromatin function and transcription. In Neurospora crassa (strain ATCC 24698 / 74-OR23-1A / CBS 708.71 / DSM 1257 / FGSC 987), this protein is E3 ubiquitin-protein ligase listerin (rkr-1).